The following is a 119-amino-acid chain: uncharacterized protein (119 aa).

This is an uncharacterized protein from Lactococcus lactis subsp. lactis (strain IL1403) (Streptococcus lactis).